The chain runs to 365 residues: MDIIETAKLEEHLENQPSDPTNTYARPAEPVEEENKNGNGKPKSLSSGLRKGTKKYPDYIQIAMPTESRNKFPLEWWKTGIAFIYAVFNLVLTTVMITVVHERVPPKELSPPLPDKFFDYIDRVKWAFSVSEINGIILVGLWITQWLFLRYKSIVGRRFCFIIGTLYLYRCITMYVTTLPVPGMHFQCAPKLNGDSQAKVQRILRLISGGGLSITGSHILCGDFLFSGHTVTLTLTYLFIKEYSPRHFWWYHLICWLLSAAGIICILVAHEHYTIDVIIAYYITTRLFWWYHSMANEKNLKVSSQTNFLSRAWWFPIFYFFEKNVQGSIPCCFSWPLSWPPGCFKSSCKKYSRVQKIGEDNEKST.

Residues 1 to 14 (MDIIETAKLEEHLE) show a composition bias toward basic and acidic residues. The disordered stretch occupies residues 1 to 52 (MDIIETAKLEEHLENQPSDPTNTYARPAEPVEEENKNGNGKPKSLSSGLRKG). The segment covering 15 to 24 (NQPSDPTNTY) has biased composition (polar residues). 4 consecutive transmembrane segments (helical) span residues 80–100 (GIAFIYAVFNLVLTTVMITVV), 128–148 (FSVSEINGIILVGLWITQWLF), 159–179 (FCFIIGTLYLYRCITMYVTTL), and 206–226 (LISGGGLSITGSHILCGDFLF). H229 is an active-site residue. Residues 248–268 (FWWYHLICWLLSAAGIICILV) traverse the membrane as a helical segment. Catalysis depends on residues H272 and D276. A helical transmembrane segment spans residues 275–295 (IDVIIAYYITTRLFWWYHSMA). The Cytoplasmic portion of the chain corresponds to 296–365 (NEKNLKVSSQ…KIGEDNEKST (70 aa)). 4 S-palmitoyl cysteine lipidation sites follow: C331, C332, C343, and C348.

This sequence belongs to the sphingomyelin synthase family. In terms of processing, palmitoylated on Cys-331, Cys-332, Cys-343 and Cys-348; which plays an important role in plasma membrane localization. Brain, heart, kidney, liver, muscle and stomach. Also expressed in a number of cell lines such as carcinoma HeLa cells, hepatoma Hep-G2 cells, and colon carcinoma Caco-2 cells.

The protein resides in the cell membrane. It localises to the golgi apparatus membrane. The enzyme catalyses an N-acylsphing-4-enine + a 1,2-diacyl-sn-glycero-3-phosphocholine = a sphingomyelin + a 1,2-diacyl-sn-glycerol. It carries out the reaction an N-acylsphinganine + a 1,2-diacyl-sn-glycero-3-phosphocholine = an N-acylsphinganine-1-phosphocholine + a 1,2-diacyl-sn-glycerol. The catalysed reaction is an N-acyl-(4R)-4-hydroxysphinganine + a 1,2-diacyl-sn-glycero-3-phosphocholine = an N-acyl-(4R)-4-hydroxysphinganine-phosphocholine + a 1,2-diacyl-sn-glycerol. It catalyses the reaction an N-acylsphinganine + a 1,2-diacyl-sn-glycero-3-phosphoethanolamine = an N-acylsphinganine-1-phosphoethanolamine + a 1,2-diacyl-sn-glycerol. The enzyme catalyses an N-acyl-(4R)-4-hydroxysphinganine + a 1,2-diacyl-sn-glycero-3-phosphoethanolamine = an N-acyl-(4R)-4-hydroxysphinganine-1-phosphoethanolamine + a 1,2-diacyl-sn-glycerol. It carries out the reaction an N-acylsphing-4-enine + a 1,2-diacyl-sn-glycero-3-phosphoethanolamine = an N-acylsphing-4-enine 1-phosphoethanolamine + a 1,2-diacyl-sn-glycerol. The catalysed reaction is 1,2-dihexadecanoyl-sn-glycero-3-phosphocholine + an N-acylsphing-4-enine = 1,2-dihexadecanoyl-sn-glycerol + a sphingomyelin. It catalyses the reaction 1-(9Z-octadecenoyl)-2-acyl-sn-3-glycerol + a sphingomyelin = a 1-(9Z-octadecenoyl)-2-acyl-sn-glycero-3-phosphocholine + an N-acylsphing-4-enine. The enzyme catalyses N-hexadecanoylsphinganine + a 1,2-diacyl-sn-glycero-3-phosphocholine = N-hexadecanoyl-sphinganine-1-phosphocholine + a 1,2-diacyl-sn-glycerol. It carries out the reaction N-hexadecanoyl-(4R)-hydroxysphinganine + a 1,2-diacyl-sn-glycero-3-phosphocholine = N-hexadecanoyl-(4R)-hydroxysphinganine-phosphocholine + a 1,2-diacyl-sn-glycerol. The catalysed reaction is N-hexadecanoylsphinganine + a 1,2-diacyl-sn-glycero-3-phosphoethanolamine = N-hexadecanoyl-sphinganine-1-phosphoethanolamine + a 1,2-diacyl-sn-glycerol. It catalyses the reaction N-hexadecanoyl-(4R)-hydroxysphinganine + a 1,2-diacyl-sn-glycero-3-phosphoethanolamine = N-hexadecanoyl-(4R)-hydroxysphinganine-1-phosphoethanolamine + a 1,2-diacyl-sn-glycerol. It participates in sphingolipid metabolism. With respect to regulation, inhibited by bacterial PC-phospholipase C inhibitor D609. Its function is as follows. Sphingomyelin synthase that primarily contributes to sphingomyelin synthesis and homeostasis at the plasma membrane. Catalyzes the reversible transfer of phosphocholine moiety in sphingomyelin biosynthesis: in the forward reaction transfers phosphocholine head group of phosphatidylcholine (PC) on to ceramide (CER) to form ceramide phosphocholine (sphingomyelin, SM) and diacylglycerol (DAG) as by-product, and in the reverse reaction transfers phosphocholine from SM to DAG to form PC and CER. The direction of the reaction appears to depend on the levels of CER and DAG in the plasma membrane. Does not use free phosphorylcholine or CDP-choline as donors. Can also transfer phosphoethanolamine head group of phosphatidylethanolamine (PE) on to ceramide (CER) to form ceramide phosphoethanolamine (CPE). Regulates receptor-mediated signal transduction via mitogenic DAG and proapoptotic CER, as well as via SM, a structural component of membrane rafts that serve as platforms for signal transduction and protein sorting. To a lesser extent, plays a role in secretory transport via regulation of DAG pool at the Golgi apparatus and its downstream effects on PRKD1. Required for normal bone matrix mineralization. The chain is Phosphatidylcholine:ceramide cholinephosphotransferase 2 from Homo sapiens (Human).